We begin with the raw amino-acid sequence, 178 residues long: Cytochrome b6-f complex iron-sulfur subunit (178 aa).

Residues 20–42 form a helical membrane-spanning segment; that stretch reads LLTFGTATGVALGALYPVANYFM. The Rieske domain maps to 65–161; it reads KTGWLATHQA…VDIEDDAVLV (97 aa). [2Fe-2S] cluster is bound by residues cysteine 107, histidine 109, cysteine 125, and histidine 128. A disulfide bond links cysteine 112 and cysteine 127.

This sequence belongs to the Rieske iron-sulfur protein family. In terms of assembly, the 4 large subunits of the cytochrome b6-f complex are cytochrome b6, subunit IV (17 kDa polypeptide, PetD), cytochrome f and the Rieske protein, while the 4 small subunits are PetG, PetL, PetM and PetN. The complex functions as a dimer. [2Fe-2S] cluster serves as cofactor.

Its subcellular location is the cellular thylakoid membrane. It catalyses the reaction 2 oxidized [plastocyanin] + a plastoquinol + 2 H(+)(in) = 2 reduced [plastocyanin] + a plastoquinone + 4 H(+)(out). In terms of biological role, component of the cytochrome b6-f complex, which mediates electron transfer between photosystem II (PSII) and photosystem I (PSI), cyclic electron flow around PSI, and state transitions. This Prochlorococcus marinus (strain AS9601) protein is Cytochrome b6-f complex iron-sulfur subunit.